A 473-amino-acid chain; its full sequence is Putative amidase AmiC (473 aa).

Catalysis depends on charge relay system residues lysine 82 and serine 157. Serine 181 serves as the catalytic Acyl-ester intermediate.

It belongs to the amidase family.

It carries out the reaction a monocarboxylic acid amide + H2O = a monocarboxylate + NH4(+). The polypeptide is Putative amidase AmiC (amiC) (Mycobacterium bovis (strain ATCC BAA-935 / AF2122/97)).